A 972-amino-acid polypeptide reads, in one-letter code: Isoleucine--tRNA ligase (972 aa).

The 'HIGH' region signature appears at 63–73 (PYANGNIHIGH). Residue Glu-603 coordinates L-isoleucyl-5'-AMP. Positions 644 to 648 (KMSKS) match the 'KMSKS' region motif. Lys-647 contacts ATP.

The protein belongs to the class-I aminoacyl-tRNA synthetase family. IleS type 1 subfamily. Monomer.

The protein localises to the cytoplasm. It catalyses the reaction tRNA(Ile) + L-isoleucine + ATP = L-isoleucyl-tRNA(Ile) + AMP + diphosphate. Catalyzes the attachment of isoleucine to tRNA(Ile). As IleRS can inadvertently accommodate and process structurally similar amino acids such as valine, to avoid such errors it has two additional distinct tRNA(Ile)-dependent editing activities. One activity is designated as 'pretransfer' editing and involves the hydrolysis of activated Val-AMP. The other activity is designated 'posttransfer' editing and involves deacylation of mischarged Val-tRNA(Ile). The polypeptide is Isoleucine--tRNA ligase (Brucella suis biovar 1 (strain 1330)).